Consider the following 396-residue polypeptide: Agropine synthesis cyclase (396 aa).

It belongs to the peptidase M24B family.

The chain is Agropine synthesis cyclase (ags) from Rhizobium rhizogenes (Agrobacterium rhizogenes).